The following is a 476-amino-acid chain: Glycogen synthase (476 aa).

Lys-15 contributes to the ADP-alpha-D-glucose binding site.

Belongs to the glycosyltransferase 1 family. Bacterial/plant glycogen synthase subfamily.

It catalyses the reaction [(1-&gt;4)-alpha-D-glucosyl](n) + ADP-alpha-D-glucose = [(1-&gt;4)-alpha-D-glucosyl](n+1) + ADP + H(+). The protein operates within glycan biosynthesis; glycogen biosynthesis. Functionally, synthesizes alpha-1,4-glucan chains using ADP-glucose. The chain is Glycogen synthase from Bacillus cereus (strain ATCC 14579 / DSM 31 / CCUG 7414 / JCM 2152 / NBRC 15305 / NCIMB 9373 / NCTC 2599 / NRRL B-3711).